The chain runs to 95 residues: Small ribosomal subunit protein bS18 (95 aa).

Belongs to the bacterial ribosomal protein bS18 family. As to quaternary structure, part of the 30S ribosomal subunit. Forms a tight heterodimer with protein bS6.

Functionally, binds as a heterodimer with protein bS6 to the central domain of the 16S rRNA, where it helps stabilize the platform of the 30S subunit. In Rickettsia africae (strain ESF-5), this protein is Small ribosomal subunit protein bS18.